Reading from the N-terminus, the 360-residue chain is Phenylalanine--tRNA ligase alpha subunit (360 aa).

E260 serves as a coordination point for Mg(2+).

The protein belongs to the class-II aminoacyl-tRNA synthetase family. Phe-tRNA synthetase alpha subunit type 1 subfamily. Tetramer of two alpha and two beta subunits. It depends on Mg(2+) as a cofactor.

The protein localises to the cytoplasm. It catalyses the reaction tRNA(Phe) + L-phenylalanine + ATP = L-phenylalanyl-tRNA(Phe) + AMP + diphosphate + H(+). The polypeptide is Phenylalanine--tRNA ligase alpha subunit (Bradyrhizobium sp. (strain BTAi1 / ATCC BAA-1182)).